Consider the following 557-residue polypeptide: Interferon alpha/beta receptor 1 (557 aa).

A signal peptide spans 1-27 (MMVVLLGATTLVLVAVAPWVLSAAAGG). Residues 28–436 (KNLKSPQKVE…EKTKPGNTSK (409 aa)) lie on the Extracellular side of the membrane. 4 Fibronectin type-III domains span residues 32 to 126 (SPQK…FRKA), 127 to 227 (QIGP…TVEN), 231 to 329 (PPEN…TEIQ), and 331 to 432 (FLLP…TKPG). Residues N50, N58, N81, N88, N110, and N172 are each glycosylated (N-linked (GlcNAc...) asparagine). Cysteines 79 and 87 form a disulfide. C199 and C220 are oxidised to a cystine. An N-linked (GlcNAc...) asparagine glycan is attached at N254. C283 and C291 are disulfide-bonded. N-linked (GlcNAc...) asparagine glycans are attached at residues N313, N314, N376, N416, and N433. C403 and C426 form a disulfide bridge. The chain crosses the membrane as a helical span at residues 437-457 (IWLIVGICIALFALPFVIYAA). The Cytoplasmic segment spans residues 458-557 (KVFLRCINYV…TSEELQQDFV (100 aa)). Residue C463 is the site of S-palmitoyl cysteine attachment. Phosphotyrosine; by TYK2 occurs at positions 466 and 481. The important for interaction with TYK2 stretch occupies residues 491–500 (LLSTSEEQIE). S495 carries the phosphoserine modification. Residues K501, K525, and K526 each participate in a glycyl lysine isopeptide (Lys-Gly) (interchain with G-Cter in ubiquitin) cross-link. The disordered stretch occupies residues 516–557 (ETNQTDEDHKKYSSQTSQDSGNYSNEDESESKTSEELQQDFV). A compositionally biased stretch (polar residues) spans 528–539 (SSQTSQDSGNYS). S535 carries the phosphoserine modification.

The protein belongs to the type II cytokine receptor family. As to quaternary structure, heterodimer with IFNAR2; forming the receptor for type I interferon. Interacts with TYK2. Interacts with STAT1 and STAT2; the interaction requires its phosphorylation at Tyr-466. Interacts (serine-phosphorylated form) with FBXW11, the substrate recognition component of a SCF (SKP1-CUL1-F-box protein) E3 ubiquitin-protein ligase complex. Interacts with SHMT2; this promotes interaction with ABRAXAS2 and the BRISC complex. Interacts with TRIM10; this interaction prevents association between IFNAR1 and TYK2. In terms of processing, ubiquitinated, leading to its internalization and degradation. Polyubiquitinated via 'Lys-48'-linked and 'Lys-63'-linked ubiquitin chains, leading to receptor internalization and lysosomal degradation. The 'Lys-63'-linked ubiquitin chains are cleaved off by the BRISC complex. Phosphorylated on tyrosine residues in response to interferon-binding: phosphorylation by TYK2 tyrosine kinase creates docking sites for STAT proteins. Phosphorylated on serine residues in response to interferon binding; this promotes interaction with FBXW11 and ubiquitination. Post-translationally, palmitoylation at Cys-463 is required for the activation of STAT1 and STAT2. As to expression, IFN receptors are present in all tissues and even on the surface of most IFN-resistant cells. Isoform 1, isoform 2 and isoform 3 are expressed in the IFN-alpha sensitive myeloma cell line U266B1. Isoform 2 and isoform 3 are expressed in the IFN-alpha resistant myeloma cell line U266R. Isoform 1 is not expressed in IFN-alpha resistant myeloma cell line U266R.

It localises to the cell membrane. It is found in the late endosome. The protein localises to the lysosome. In terms of biological role, together with IFNAR2, forms the heterodimeric receptor for type I interferons (including interferons alpha, beta, epsilon, omega and kappa). Type I interferon binding activates the JAK-STAT signaling cascade, resulting in transcriptional activation or repression of interferon-regulated genes that encode the effectors of the interferon response. Mechanistically, type I interferon-binding brings the IFNAR1 and IFNAR2 subunits into close proximity with one another, driving their associated Janus kinases (JAKs) (TYK2 bound to IFNAR1 and JAK1 bound to IFNAR2) to cross-phosphorylate one another. The activated kinases phosphorylate specific tyrosine residues on the intracellular domains of IFNAR1 and IFNAR2, forming docking sites for the STAT transcription factors. STAT proteins are then phosphorylated by the JAKs, promoting their translocation into the nucleus to regulate expression of interferon-regulated genes. Can also act independently of IFNAR2: form an active IFNB1 receptor by itself and activate a signaling cascade that does not involve activation of the JAK-STAT pathway. The sequence is that of Interferon alpha/beta receptor 1 (IFNAR1) from Homo sapiens (Human).